The chain runs to 1212 residues: uncharacterized protein (1212 aa).

The interval 783 to 802 is disordered; that stretch reads TRQDASGGSSSGTKKGEKLQ.

This is an uncharacterized protein from Human herpesvirus 6B (strain Z29) (HHV-6 variant B).